Reading from the N-terminus, the 225-residue chain is UPF0758 protein BPP1850 (225 aa).

In terms of domain architecture, MPN spans Ala103–Leu225. Zn(2+)-binding residues include His174, His176, and Asp187. A JAMM motif motif is present at residues His174–Asp187.

The protein belongs to the UPF0758 family.

The sequence is that of UPF0758 protein BPP1850 from Bordetella parapertussis (strain 12822 / ATCC BAA-587 / NCTC 13253).